The sequence spans 425 residues: Calreticulin-1 (425 aa).

Positions 1–22 (MAKLNPKFISLILFALVVIVSA) are cleaved as a signal peptide. A glycan (N-linked (GlcNAc...) asparagine) is linked at Asn-59. An intrachain disulfide couples Cys-108 to Cys-140. The an alpha-D-glucoside site is built by Tyr-112, Lys-114, Tyr-131, and Asp-138. Asn-154 is a glycosylation site (N-linked (GlcNAc...) asparagine). Tandem repeats lie at residues 194–205 (KQTGSLYSDWDL), 213–224 (DPSAKKPEDWDD), 230–241 (DPEDTKPAGYDD), 248–259 (DTDAKKPEDWDD), 263–273 (GEWTAPTIPNP), 277–287 (GEWKPKKIKNP), and 291–301 (GKWKAPMIDNP). Residues 194 to 259 (KQTGSLYSDW…DAKKPEDWDD (66 aa)) form a 4 X approximate repeats region. Basic and acidic residues-rich tracts occupy residues 213 to 235 (DPSAKKPEDWDDKEYIPDPEDTK) and 241 to 255 (DIPKEIPDTDAKKPE). Positions 213–281 (DPSAKKPEDW…NPEYNGEWKP (69 aa)) are disordered. Positions 263–301 (GEWTAPTIPNPEYNGEWKPKKIKNPAYKGKWKAPMIDNP) are 3 X approximate repeats. An an alpha-D-glucoside-binding site is contributed by Glu-321. Positions 348–378 (EETWGKHKDAEKAAFDEAEKKREEEESKDAP) are enriched in basic and acidic residues. The disordered stretch occupies residues 348-425 (EETWGKHKDA…EETDAAHDEL (78 aa)). The segment covering 379 to 398 (AESDAEEEAEDDDNEGDDSD) has biased composition (acidic residues). Phosphoserine occurs at positions 381 and 397. Residue Asn-399 is glycosylated (N-linked (GlcNAc...) asparagine). The segment covering 399-412 (NESKSEETKEAEET) has biased composition (basic and acidic residues). A Prevents secretion from ER motif is present at residues 422–425 (HDEL).

Belongs to the calreticulin family.

It localises to the endoplasmic reticulum lumen. Molecular calcium-binding chaperone promoting folding, oligomeric assembly and quality control in the ER via the calreticulin/calnexin cycle. This lectin may interact transiently with almost all of the monoglucosylated glycoproteins that are synthesized in the ER. This Arabidopsis thaliana (Mouse-ear cress) protein is Calreticulin-1 (CRT1).